The following is a 116-amino-acid chain: Protein Rev (116 aa).

Ser-5 and Ser-8 each carry phosphoserine; by host CK2. Positions 18–26 (LIKFLYQSN) are homomultimerization. A disordered region spans residues 23-48 (YQSNPPPNPEGTRQARRNRRRRWRER). The Nuclear localization signal and RNA-binding (RRE) signature appears at 34–50 (TRQARRNRRRRWRERQR). Positions 36-48 (QARRNRRRRWRER) are enriched in basic residues. Positions 73-84 (LQLPPLERLNLD) match the Nuclear export signal and binding to XPO1 motif. The interval 90-116 (GTSGTQGVGSPEILVESPAVLEPGTKE) is disordered. A phosphoserine; by host mark is found at Ser-92 and Ser-99.

This sequence belongs to the HIV-1 REV protein family. As to quaternary structure, homomultimer; when bound to the RRE. Multimeric assembly is essential for activity and may involve XPO1. Binds to human KPNB1, XPO1, TNPO1, RANBP5 and IPO7. Interacts with the viral Integrase. Interacts with human KHDRBS1. Interacts with human NAP1; this interaction decreases Rev multimerization and stimulates its activity. Interacts with human DEAD-box helicases DDX3 and DDX24; these interactions may serve for viral RNA export to the cytoplasm and packaging, respectively. Interacts with human PSIP1; this interaction may inhibit HIV-1 DNA integration by promoting dissociation of the Integrase-LEDGF/p75 complex. Post-translationally, asymmetrically arginine dimethylated at one site by host PRMT6. Methylation impairs the RNA-binding activity and export of viral RNA from the nucleus to the cytoplasm. Phosphorylated by protein kinase CK2. Presence of, and maybe binding to the N-terminus of the regulatory beta subunit of CK2 is necessary for CK2-mediated Rev's phosphorylation.

The protein resides in the host nucleus. The protein localises to the host nucleolus. Its subcellular location is the host cytoplasm. Escorts unspliced or incompletely spliced viral pre-mRNAs (late transcripts) out of the nucleus of infected cells. These pre-mRNAs carry a recognition sequence called Rev responsive element (RRE) located in the env gene, that is not present in fully spliced viral mRNAs (early transcripts). This function is essential since most viral proteins are translated from unspliced or partially spliced pre-mRNAs which cannot exit the nucleus by the pathway used by fully processed cellular mRNAs. Rev itself is translated from a fully spliced mRNA that readily exits the nucleus. Rev's nuclear localization signal (NLS) binds directly to KPNB1/Importin beta-1 without previous binding to KPNA1/Importin alpha-1. KPNB1 binds to the GDP bound form of RAN (Ran-GDP) and targets Rev to the nucleus. In the nucleus, the conversion from Ran-GDP to Ran-GTP dissociates Rev from KPNB1 and allows Rev's binding to the RRE in viral pre-mRNAs. Rev multimerization on the RRE via cooperative assembly exposes its nuclear export signal (NES) to the surface. Rev can then form a complex with XPO1/CRM1 and Ran-GTP, leading to nuclear export of the complex. Conversion from Ran-GTP to Ran-GDP mediates dissociation of the Rev/RRE/XPO1/RAN complex, so that Rev can return to the nucleus for a subsequent round of export. Beside KPNB1, also seems to interact with TNPO1/Transportin-1, RANBP5/IPO5 and IPO7/RANBP7 for nuclear import. The nucleoporin-like HRB/RIP is an essential cofactor that probably indirectly interacts with Rev to release HIV RNAs from the perinuclear region to the cytoplasm. The protein is Protein Rev of Human immunodeficiency virus type 1 group M subtype B (isolate OYI) (HIV-1).